A 234-amino-acid chain; its full sequence is Preflagellin peptidase (234 aa).

Position 1 (methionine 1) is a topological domain, cytoplasmic. A helical membrane pass occupies residues 2 to 18 (INFIVGAIGLLIASIYD). Over 19–23 (LKSRE) the chain is Extracellular. A helical membrane pass occupies residues 24 to 46 (IEDYVWVSMVIFGLIYNGYLSFI). At 47–49 (SHD) the chain is on the cytoplasmic side. The chain crosses the membrane as a helical span at residues 50–72 (MLYVIQSIVGFIVCFFLGFFMFL). Residues 73 to 78 (LGVGGG) are Extracellular-facing. A helical membrane pass occupies residues 79–89 (DGKLIMGLGAL). Residues 90–110 (IPKYNMPIHTPLGAILNYLYL) lie on the Cytoplasmic side of the membrane. The helical transmembrane segment at 111-139 (PSFPIMVVINAMFFSITLPIIIFLRNVIR) threads the bilayer. Over 140 to 205 (GVKPKTKKEV…EEIWVTPAIP (66 aa)) the chain is Extracellular. Residues 206 to 217 (FVVPIFLSYLLT) traverse the membrane as a helical segment. The Cytoplasmic portion of the chain corresponds to 218-234 (SIIGDKIIGIFLSVFGL).

The protein belongs to the peptidase A24 family. Archaeal preflagellin peptidase subfamily.

Its subcellular location is the cell membrane. The catalysed reaction is Cleaves the signal peptide of 3 to 12 amino acids from the N-terminal of preflagellin, usually at Arg-Gly-|- or Lys-Gly-|-, to release flagellin.. Its function is as follows. Cleaves the N-terminal leader peptide from preflagellins. The polypeptide is Preflagellin peptidase (flaK) (Methanocaldococcus jannaschii (strain ATCC 43067 / DSM 2661 / JAL-1 / JCM 10045 / NBRC 100440) (Methanococcus jannaschii)).